Here is a 3032-residue protein sequence, read N- to C-terminus: Biorientation of chromosomes in cell division protein 1-like 1 (3032 aa).

The span at 1–31 (MATNPQPQPPPPAPPPPPPQPQPPPPPPGPG) shows a compositional bias: pro residues. 4 disordered regions span residues 1–48 (MATN…GAGD), 164–195 (EEAA…SANV), 214–397 (NAAR…LDSD), and 409–465 (VHTS…RGVR). Over residues 32 to 46 (AGPGASGPGSAGAGA) the composition is skewed to gly residues. Positions 234–243 (KLSSQPSTDV) are enriched in polar residues. Residues 244 to 261 (STDKERGSEDATEREKAT) show a composition bias toward basic and acidic residues. Ser-264 carries the post-translational modification Phosphoserine. Basic and acidic residues predominate over residues 310–391 (TDPKIKSMDK…RAAEGTKEDC (82 aa)). The segment covering 416 to 441 (SFEEDTEEEVVVSESMEEGEITSEDE) has biased composition (acidic residues). Position 471 is an N6-acetyllysine (Lys-471). A phosphoserine mark is found at Ser-480 and Ser-482. Disordered regions lie at residues 480–1153 (SDSD…HKAT), 1165–1296 (MVDS…HNSN), 1309–1366 (GGRA…LSED), 1424–1491 (AAGE…SGRR), 1675–1701 (GSLS…TEGT), 1740–1858 (AKPQ…GHAS), and 1934–1978 (ALAG…ISTG). Composition is skewed to basic and acidic residues over residues 488–503 (VEQR…EERL) and 510–525 (REKL…EKTK). Lys-534 is modified (N6-acetyllysine). Composition is skewed to basic and acidic residues over residues 547 to 568 (LEPK…EKKV) and 578 to 653 (SRNV…EYKR). Phosphoserine is present on residues Ser-632 and Ser-656. Residue Thr-657 is modified to Phosphothreonine. Composition is skewed to basic and acidic residues over residues 668-736 (TDTR…DKPS), 743-768 (GDSV…ESVR), and 799-846 (RDGK…KLQK). Residues 848 to 859 (ALSSKQHSVTSQ) show a composition bias toward polar residues. 4 stretches are compositionally biased toward basic and acidic residues: residues 860-872 (KRSE…KCET), 934-960 (KPDK…RTSE), 978-1015 (AQKD…DGHR), and 1022-1069 (SNKD…ENRR). The residue at position 1071 (Ser-1071) is a Phosphoserine. Positions 1086–1096 (MSGTTSSSSLQ) are enriched in polar residues. A Phosphoserine modification is found at Ser-1138. Residues 1272–1286 (STDSDLLSSSGSVTV) are compositionally biased toward low complexity. A compositionally biased stretch (polar residues) spans 1312–1329 (ASTSLANHSDVPNQYSTV). Residues Ser-1315 and Ser-1364 each carry the phosphoserine modification. 2 stretches are compositionally biased toward basic and acidic residues: residues 1428-1470 (HVVD…RRDS) and 1479-1491 (GKME…SGRR). 2 positions are modified to phosphoserine: Ser-1676 and Ser-1685. Positions 1958-1970 (HHSDSQLTRKETV) are enriched in basic and acidic residues. Residues Ser-1989, Ser-2001, Ser-2092, and Ser-2166 each carry the phosphoserine modification. The tract at residues 2082–2101 (PMPSAVSGENSQLTASRSEE) is disordered. The segment covering 2088–2097 (SGENSQLTAS) has biased composition (polar residues). 4 disordered regions span residues 2303–2322 (EENQ…LATK), 2370–2469 (EPSV…HCLT), 2536–2559 (EGGL…EKMG), and 2575–2596 (DVTL…PPKG). Phosphoserine is present on residues Ser-2417 and Ser-2443. Residues 2449–2459 (CLREPEQKPAE) show a composition bias toward basic and acidic residues. The residue at position 2554 (Ser-2554) is a Phosphoserine. Ser-2681 carries the phosphoserine modification. The tract at residues 2682-3032 (TEALSGCSVE…DENPLKKAKR (351 aa)) is disordered. Composition is skewed to acidic residues over residues 2692–2701 (ADPEEVEEEE) and 2715–2725 (SSEEELDDSPD). Basic and acidic residues predominate over residues 2727-2750 (LDSRIETAQRQYSETEPHDTKEEN). Residues 2758–2769 (SSVTSKTNSSTG) are compositionally biased toward polar residues. A compositionally biased stretch (basic and acidic residues) spans 2782-2804 (TGEKTEPNEDDGSIKSQEDDHPI). Residues 2805-2815 (IIKRRRGRPRK) are compositionally biased toward basic residues. Positions 2807–2819 (KRRRGRPRKYPAE) form a DNA-binding region, a.T hook. Residues 2822 to 2832 (FKSKEDSKTET) show a composition bias toward basic and acidic residues. A compositionally biased stretch (polar residues) spans 2833 to 2843 (DITTVEQSSPS). Phosphoserine occurs at positions 2840 and 2841. Residues 2853–2867 (ESNKEIANLEEKSTS) show a composition bias toward basic and acidic residues. Ser-2888 is modified (phosphoserine). Thr-2890 is subject to Phosphothreonine. Phosphoserine is present on residues Ser-2892, Ser-2898, and Ser-2907. Residues Lys-2915 and Lys-2916 each participate in a glycyl lysine isopeptide (Lys-Gly) (interchain with G-Cter in ubiquitin) cross-link. The segment covering 2919 to 2932 (ESDEEEEEEEEEEP) has biased composition (acidic residues). Position 2920 is a phosphoserine (Ser-2920). Over residues 2975–2987 (LAKEKLSTSEKVS) the composition is skewed to basic and acidic residues. Ser-3000 is subject to Phosphoserine. Residues 3020–3032 (QKVDENPLKKAKR) are compositionally biased toward basic and acidic residues.

It belongs to the BOD1 family. Interacts (via COMPASS-Shg1 domain) with SETD1A at stalled replication forks; this interaction mediates FANCD2-dependent nucleosome remodeling at reversed forks protecting them from nucleolytic degradation.

It is found in the chromosome. Component of the fork protection machinery required to protect stalled/damaged replication forks from uncontrolled DNA2-dependent resection. Acts by stabilizing RAD51 at stalled replication forks and protecting RAD51 nucleofilaments from the antirecombinogenic activities of FBH1 and BLM. Does not regulate spindle orientation. The polypeptide is Biorientation of chromosomes in cell division protein 1-like 1 (Mus musculus (Mouse)).